A 425-amino-acid polypeptide reads, in one-letter code: Serine--tRNA ligase (425 aa).

230–232 (TAE) is an L-serine binding site. 261–263 (RSE) is an ATP binding site. Glu-284 contacts L-serine. An ATP-binding site is contributed by 348-351 (EISS). Residue Ser-383 coordinates L-serine.

It belongs to the class-II aminoacyl-tRNA synthetase family. Type-1 seryl-tRNA synthetase subfamily. As to quaternary structure, homodimer. The tRNA molecule binds across the dimer.

The protein localises to the cytoplasm. It carries out the reaction tRNA(Ser) + L-serine + ATP = L-seryl-tRNA(Ser) + AMP + diphosphate + H(+). The enzyme catalyses tRNA(Sec) + L-serine + ATP = L-seryl-tRNA(Sec) + AMP + diphosphate + H(+). It participates in aminoacyl-tRNA biosynthesis; selenocysteinyl-tRNA(Sec) biosynthesis; L-seryl-tRNA(Sec) from L-serine and tRNA(Sec): step 1/1. Functionally, catalyzes the attachment of serine to tRNA(Ser). Is also able to aminoacylate tRNA(Sec) with serine, to form the misacylated tRNA L-seryl-tRNA(Sec), which will be further converted into selenocysteinyl-tRNA(Sec). This is Serine--tRNA ligase from Ligilactobacillus salivarius (strain UCC118) (Lactobacillus salivarius).